Consider the following 693-residue polypeptide: Translation initiation factor IF-2 (693 aa).

One can recognise a tr-type G domain in the interval 181–349 (PRPPVVTVMG…MILLVAEMNE (169 aa)). The G1 stretch occupies residues 190 to 197 (GHVDHGKT). 190–197 (GHVDHGKT) provides a ligand contact to GTP. Residues 215 to 219 (GITQS) form a G2 region. The tract at residues 236-239 (DTPG) is G3. GTP contacts are provided by residues 236–240 (DTPGH) and 290–293 (NKID). Residues 290-293 (NKID) are G4. Residues 327–329 (SAR) form a G5 region.

This sequence belongs to the TRAFAC class translation factor GTPase superfamily. Classic translation factor GTPase family. IF-2 subfamily.

The protein resides in the cytoplasm. In terms of biological role, one of the essential components for the initiation of protein synthesis. Protects formylmethionyl-tRNA from spontaneous hydrolysis and promotes its binding to the 30S ribosomal subunits. Also involved in the hydrolysis of GTP during the formation of the 70S ribosomal complex. The polypeptide is Translation initiation factor IF-2 (Thermotoga petrophila (strain ATCC BAA-488 / DSM 13995 / JCM 10881 / RKU-1)).